The primary structure comprises 536 residues: Anthranilate synthase component 1 2 (536 aa).

Residues Ser-59 and 299–301 (PYM) contribute to the L-tryptophan site. 334 to 335 (GT) lines the chorismate pocket. A Mg(2+)-binding site is contributed by Glu-361. Residues Tyr-449, Arg-469, 487 to 489 (GAG), and Gly-489 each bind chorismate. Glu-502 lines the Mg(2+) pocket.

This sequence belongs to the anthranilate synthase component I family. As to quaternary structure, tetramer of two components I and two components II. It depends on Mg(2+) as a cofactor.

It carries out the reaction chorismate + L-glutamine = anthranilate + pyruvate + L-glutamate + H(+). It functions in the pathway amino-acid biosynthesis; L-tryptophan biosynthesis; L-tryptophan from chorismate: step 1/5. The protein is Anthranilate synthase component 1 2 (trpE2) of Haloarcula marismortui (strain ATCC 43049 / DSM 3752 / JCM 8966 / VKM B-1809) (Halobacterium marismortui).